A 369-amino-acid chain; its full sequence is Melanoma-associated antigen 10 (369 aa).

Residues 1-131 (MPRAPKRQRC…VLPDSESLPR (131 aa)) form a disordered region. Low complexity predominate over residues 39–62 (SSSTSTSSSFPSSFPSSSSSSSSS). Composition is skewed to polar residues over residues 85–96 (QSAQIACSSPSV) and 107–121 (EGSS…STLQ). Residues 134–333 (IDEKVTDLVQ…RSFPLWYEEA (200 aa)) form the MAGE domain. Residues 340-369 (RAQDRIATTDDTTAMASASSSATGSFSYPE) are disordered. The segment covering 348 to 369 (TDDTTAMASASSSATGSFSYPE) has biased composition (low complexity).

In terms of tissue distribution, expressed in many tumors of several types, such as melanoma, head and neck squamous cell carcinoma, lung carcinoma and breast carcinoma, but not in normal tissues except for spermatogonia, spermatocytes and placenta.

It is found in the nucleus. Functionally, not known, though may play a role in embryonal development and tumor transformation or aspects of tumor progression. The polypeptide is Melanoma-associated antigen 10 (MAGEA10) (Homo sapiens (Human)).